The primary structure comprises 378 residues: Erythronate-4-phosphate dehydrogenase (378 aa).

Positions 45 and 66 each coordinate substrate. Positions 146 and 175 each coordinate NAD(+). R208 is an active-site residue. Position 232 (D232) interacts with NAD(+). E237 is a catalytic residue. H254 (proton donor) is an active-site residue. G257 lines the NAD(+) pocket. Residue Y258 participates in substrate binding.

The protein belongs to the D-isomer specific 2-hydroxyacid dehydrogenase family. PdxB subfamily. As to quaternary structure, homodimer.

The protein localises to the cytoplasm. It catalyses the reaction 4-phospho-D-erythronate + NAD(+) = (R)-3-hydroxy-2-oxo-4-phosphooxybutanoate + NADH + H(+). Its pathway is cofactor biosynthesis; pyridoxine 5'-phosphate biosynthesis; pyridoxine 5'-phosphate from D-erythrose 4-phosphate: step 2/5. In terms of biological role, catalyzes the oxidation of erythronate-4-phosphate to 3-hydroxy-2-oxo-4-phosphonooxybutanoate. The polypeptide is Erythronate-4-phosphate dehydrogenase (Pectobacterium carotovorum subsp. carotovorum (strain PC1)).